The sequence spans 403 residues: S-adenosylmethionine synthase (403 aa).

His17 serves as a coordination point for ATP. Residue Asp19 coordinates Mg(2+). A K(+)-binding site is contributed by Glu45. 2 residues coordinate L-methionine: Glu58 and Gln104. The segment at 104-114 (QSPDIAQGVDT) is flexible loop. ATP-binding positions include 179-181 (DGK), 250-251 (KF), Asp259, 265-266 (RK), Ala282, and Lys286. Asp259 contributes to the L-methionine binding site. Lys290 lines the L-methionine pocket.

Belongs to the AdoMet synthase family. In terms of assembly, homotetramer; dimer of dimers. The cofactor is Mg(2+). K(+) is required as a cofactor.

The protein resides in the cytoplasm. It catalyses the reaction L-methionine + ATP + H2O = S-adenosyl-L-methionine + phosphate + diphosphate. Its pathway is amino-acid biosynthesis; S-adenosyl-L-methionine biosynthesis; S-adenosyl-L-methionine from L-methionine: step 1/1. Its function is as follows. Catalyzes the formation of S-adenosylmethionine (AdoMet) from methionine and ATP. The overall synthetic reaction is composed of two sequential steps, AdoMet formation and the subsequent tripolyphosphate hydrolysis which occurs prior to release of AdoMet from the enzyme. This Mycolicibacterium paratuberculosis (strain ATCC BAA-968 / K-10) (Mycobacterium paratuberculosis) protein is S-adenosylmethionine synthase.